A 213-amino-acid polypeptide reads, in one-letter code: Ribosomal RNA small subunit methyltransferase G (213 aa).

S-adenosyl-L-methionine-binding positions include G77, F82, 130 to 131, and R146; that span reads IE.

The protein belongs to the methyltransferase superfamily. RNA methyltransferase RsmG family.

The protein resides in the cytoplasm. It carries out the reaction guanosine(527) in 16S rRNA + S-adenosyl-L-methionine = N(7)-methylguanosine(527) in 16S rRNA + S-adenosyl-L-homocysteine. In terms of biological role, specifically methylates the N7 position of guanine in position 527 of 16S rRNA. In Bartonella tribocorum (strain CIP 105476 / IBS 506), this protein is Ribosomal RNA small subunit methyltransferase G.